The sequence spans 268 residues: Tryptophan synthase alpha chain (268 aa).

Residues Glu49 and Asp60 each act as proton acceptor in the active site.

It belongs to the TrpA family. In terms of assembly, tetramer of two alpha and two beta chains.

It catalyses the reaction (1S,2R)-1-C-(indol-3-yl)glycerol 3-phosphate + L-serine = D-glyceraldehyde 3-phosphate + L-tryptophan + H2O. It participates in amino-acid biosynthesis; L-tryptophan biosynthesis; L-tryptophan from chorismate: step 5/5. Functionally, the alpha subunit is responsible for the aldol cleavage of indoleglycerol phosphate to indole and glyceraldehyde 3-phosphate. The polypeptide is Tryptophan synthase alpha chain (Erwinia tasmaniensis (strain DSM 17950 / CFBP 7177 / CIP 109463 / NCPPB 4357 / Et1/99)).